Reading from the N-terminus, the 132-residue chain is Small ribosomal subunit protein uS9 (132 aa).

This sequence belongs to the universal ribosomal protein uS9 family.

This is Small ribosomal subunit protein uS9 from Mesomycoplasma hyopneumoniae (strain 232) (Mycoplasma hyopneumoniae).